The sequence spans 61 residues: Protein stunted (61 aa).

The sufficient for mth activation stretch occupies residues 3 to 15 (AWRAAGITYIQYS).

Belongs to the eukaryotic ATPase epsilon family.

Functionally, activates the G-protein coupled receptor mth in vitro, leading to increased intracellular calcium ion levels. The polypeptide is Protein stunted (Drosophila melanogaster (Fruit fly)).